We begin with the raw amino-acid sequence, 786 residues long: uncharacterized protein (786 aa).

Trp361–Asp362 contributes to the substrate binding site. Residue Glu488 is the Proton donor of the active site. A substrate-binding site is contributed by Lys590–Gln591. The tract at residues Thr762–Arg786 is disordered. Residues Leu766 to Arg776 show a composition bias toward pro residues.

This sequence belongs to the glycosyl hydrolase 65 family.

This is an uncharacterized protein from Mycobacterium tuberculosis (strain CDC 1551 / Oshkosh).